Reading from the N-terminus, the 1087-residue chain is Fanconi-associated nuclease 1 homolog (1087 aa).

Disordered regions lie at residues 1–79, 104–154, 169–202, 459–486, 816–835, and 842–871; these read MKSN…TPIK, FQKA…PNNL, EFLL…NNIT, TQNS…NNNI, ITSD…EKEN, and SVKK…EEEI. Over residues 41-79 the composition is skewed to low complexity; that stretch reads TTTPPKTPTQPIRFTQNNNKENDKSNNNNNNNNTITPIK. A compositionally biased stretch (polar residues) spans 104–115; that stretch reads FQKASTPSSPQI. 3 stretches are compositionally biased toward low complexity: residues 118-154, 182-202, and 467-485; these read KLPQ…PNNL, NTTT…NNIT, and NNNN…NNNN. Coiled coils occupy residues 419 to 490 and 830 to 874; these read WKSK…KEYD and KIEK…IIEI. The span at 848 to 871 shows a compositional bias: acidic residues; it reads EQEEEEEEEEEGQGQEEEEEEEEI. The Mn(2+) site is built by Glu899, Asp1023, Glu1051, and Val1052. The 123-residue stretch at 961–1083 folds into the VRR-NUC domain; the sequence is DDLLILLNQS…GCDVEVCLVK (123 aa).

It belongs to the FAN1 family. It depends on Mn(2+) as a cofactor. Mg(2+) serves as cofactor.

It carries out the reaction Hydrolytically removes 5'-nucleotides successively from the 3'-hydroxy termini of 3'-hydroxy-terminated oligonucleotides.. Its function is as follows. Nuclease required for the repair of DNA interstrand cross-links (ICL). Acts as a 5'-3' exonuclease that anchors at a cut end of DNA and cleaves DNA successively at every third nucleotide, allowing to excise an ICL from one strand through flanking incisions. The sequence is that of Fanconi-associated nuclease 1 homolog (mtmr15) from Dictyostelium discoideum (Social amoeba).